The primary structure comprises 250 residues: Probable transcriptional regulatory protein DIP1378 (250 aa).

Residues 1–22 (MSGHSKWATTKHKKAANDAKRG) are disordered.

It belongs to the TACO1 family.

It localises to the cytoplasm. This Corynebacterium diphtheriae (strain ATCC 700971 / NCTC 13129 / Biotype gravis) protein is Probable transcriptional regulatory protein DIP1378.